Consider the following 321-residue polypeptide: MIKLLYPEFWQKRNIIAYLLLPISLIYQFLGYLRASLARPIMLPAKVICVGNCSVGGTGKTQIVMYLAKLLKARNVSFVIVTKAYGSNLKSATTIHQGHTALEVGDEGVILAKYGAVIATKNIKEIVPLINELKPDIIIVDDFLQNPYFHKDFTIVSVDSQRLFGNGFLIPAGPLRQYPNKALDAADLIFLVSSHQDKIPQILTPYVNKLINAQIVPSNNIDKTKNYFAFSGIGNPERFFATLKNYGLNITGYKIFPDHYNYLQADLENLYSLAKEHNAILVTTRKDHVKFNDLNNNIVCLDVELSINHPDLLNEKIFKKA.

ATP is bound at residue 54 to 61; sequence SVGGTGKT.

Belongs to the LpxK family.

It carries out the reaction a lipid A disaccharide + ATP = a lipid IVA + ADP + H(+). The protein operates within glycolipid biosynthesis; lipid IV(A) biosynthesis; lipid IV(A) from (3R)-3-hydroxytetradecanoyl-[acyl-carrier-protein] and UDP-N-acetyl-alpha-D-glucosamine: step 6/6. Functionally, transfers the gamma-phosphate of ATP to the 4'-position of a tetraacyldisaccharide 1-phosphate intermediate (termed DS-1-P) to form tetraacyldisaccharide 1,4'-bis-phosphate (lipid IVA). The protein is Tetraacyldisaccharide 4'-kinase of Rickettsia rickettsii.